The sequence spans 1736 residues: Collagen alpha-2(XI) chain (1736 aa).

Residues 1–27 (MERCSRCHHLLLLVLLLLWLSAAPAWA) form the signal peptide. Positions 57–228 (DVAYRVSRPA…ESCDQKELEC (172 aa)) constitute a Laminin G-like domain. A nonhelical region region spans residues 215 to 486 (QAAYESCDQK…ILQQARVALR (272 aa)). Disordered regions lie at residues 229-465 (EGGW…DKGP) and 485-1539 (LRGP…SPGG). Polar residues predominate over residues 258–270 (PQNQEPQAQSTES). A compositionally biased stretch (low complexity) spans 363-376 (ALSAETARSEAAAR). 3 Collagen-like domains span residues 399-447 (GPPG…GPPG), 487-545 (GPPG…ADGA), and 546-587 (RGMP…PPGE). Over residues 400–413 (PPGPEGPAGFPGPP) the composition is skewed to pro residues. The triple-helical region stretch occupies residues 487-1500 (GPPGPMGYTG…PGHPGPPGEV (1014 aa)). Residues 515 to 533 (DLGPQGPRGPQGLMGPPGK) are compositionally biased toward low complexity. Residues 615 to 624 (KGPPGIPGPP) are compositionally biased toward pro residues. Positions 650 to 663 (QQGTPGTQGLPGPQ) are enriched in low complexity. Residues 765-774 (RGEDGPEGPK) are compositionally biased toward basic and acidic residues. Positions 842 to 861 (PTGPRGQRGPRGATGKSGAK) are enriched in low complexity. The segment covering 994-1003 (GTAGGPGLKG) has biased composition (gly residues). Positions 1029–1040 (IGPPGRPGPQGP) are enriched in pro residues. Collagen-like domains are found at residues 1072-1127 (GPAG…ADGE) and 1128-1172 (PGAR…ETGD). Residues 1115 to 1133 (PVGQPGAAGADGEPGARGP) are compositionally biased toward low complexity. A compositionally biased stretch (pro residues) spans 1176 to 1187 (MGPPGPPGPRGP). Over residues 1217 to 1230 (ESGSPGVQGEPGVK) the composition is skewed to low complexity. Composition is skewed to basic and acidic residues over residues 1232–1241 (PRGERGEKGE) and 1287–1296 (DGAKGDRGED). 2 stretches are compositionally biased toward low complexity: residues 1341 to 1364 (PGAV…KPGP) and 1376 to 1386 (QQGRPGATGQA). Pro residues predominate over residues 1388–1397 (PPGPVGPPGL). Residues 1413 to 1422 (PGLIGLIGPP) are compositionally biased toward low complexity. The 56-residue stretch at 1444-1499 (GETGIPGASGPIGPGGPPGLPGPAGPKGAKGATGPAGPKGEKGVQGPPGHPGPPGE) folds into the Collagen-like 6 domain. Residues 1457-1467 (PGGPPGLPGPA) show a composition bias toward pro residues. Low complexity predominate over residues 1469–1481 (PKGAKGATGPAGP). A propeptide spans 1501–1736 (IQPLPIQMPK…VLLGPVCFMG (236 aa)) (C-terminal propeptide). The Fibrillar collagen NC1 domain maps to 1541-1735 (EEIFGSLDSL…GVLLGPVCFM (195 aa)). A disulfide bridge connects residues Cys-1571 and Cys-1603. Ca(2+) is bound by residues Asp-1589, Asn-1591, Gln-1592, Cys-1594, and Asp-1597. 2 N-linked (GlcNAc...) asparagine glycosylation sites follow: Asn-1604 and Asn-1650. Cystine bridges form between Cys-1612-Cys-1733 and Cys-1655-Cys-1689.

It belongs to the fibrillar collagen family. Trimers composed of three different chains: alpha 1(XI), alpha 2(XI), and alpha 3(XI). Alpha 3(XI) is a post-translational modification of alpha 1(II). Alpha 1(V) can also be found instead of alpha 3(XI)=1(II). Prolines at the third position of the tripeptide repeating unit (G-X-Y) are hydroxylated in some or all of the chains.

It localises to the secreted. The protein localises to the extracellular space. Its subcellular location is the extracellular matrix. Functionally, may play an important role in fibrillogenesis by controlling lateral growth of collagen II fibrils. The sequence is that of Collagen alpha-2(XI) chain (COL11A2) from Bos taurus (Bovine).